A 442-amino-acid polypeptide reads, in one-letter code: Topoisomerase I damage affected protein 11 (442 aa).

A compositionally biased stretch (basic and acidic residues) spans Glu16 to Asp31. Disordered stretches follow at residues Glu16–Trp138, Glu151–Val194, Gly298–Ser328, and Leu354–Gly379. The span at Gly42 to Gly55 shows a compositional bias: low complexity. Polar residues-rich tracts occupy residues Arg56–Asp76, Val110–Thr121, and Lys155–Pro176. Over residues Ser183–Lys192 the composition is skewed to basic and acidic residues. The stretch at Arg270 to Gln300 forms a coiled coil.

Belongs to the TDA11 family.

The protein resides in the cytoplasm. The polypeptide is Topoisomerase I damage affected protein 11 (TDA11) (Kluyveromyces lactis (strain ATCC 8585 / CBS 2359 / DSM 70799 / NBRC 1267 / NRRL Y-1140 / WM37) (Yeast)).